A 699-amino-acid chain; its full sequence is Elongation factor G (699 aa).

A tr-type G domain is found at 8–283 (EHIRNIGICA…AVVDFLPSPI (276 aa)). Residues 17–24 (AHIDAGKT), 81–85 (DTPGH), and 135–138 (NKMD) contribute to the GTP site.

The protein belongs to the TRAFAC class translation factor GTPase superfamily. Classic translation factor GTPase family. EF-G/EF-2 subfamily.

The protein resides in the cytoplasm. Functionally, catalyzes the GTP-dependent ribosomal translocation step during translation elongation. During this step, the ribosome changes from the pre-translocational (PRE) to the post-translocational (POST) state as the newly formed A-site-bound peptidyl-tRNA and P-site-bound deacylated tRNA move to the P and E sites, respectively. Catalyzes the coordinated movement of the two tRNA molecules, the mRNA and conformational changes in the ribosome. The sequence is that of Elongation factor G from Rickettsia parkeri.